We begin with the raw amino-acid sequence, 156 residues long: Isotocin-neurophysin IT 2 (156 aa).

A signal peptide spans 1–19 (MTGAAVSVCLLYALSVCSA). Cysteine 20 and cysteine 25 are disulfide-bonded. Residue glycine 28 is modified to Glycine amide. Cystine bridges form between cysteine 41/cysteine 85, cysteine 44/cysteine 58, cysteine 52/cysteine 75, cysteine 59/cysteine 65, cysteine 92/cysteine 105, cysteine 99/cysteine 117, and cysteine 106/cysteine 111.

It belongs to the vasopressin/oxytocin family. Seven disulfide bonds are present in neurophysin.

Its subcellular location is the secreted. Its function is as follows. Isotocin causes contraction of smooth muscles. This is Isotocin-neurophysin IT 2 from Oncorhynchus keta (Chum salmon).